Reading from the N-terminus, the 436-residue chain is Adenylosuccinate synthetase (436 aa).

GTP contacts are provided by residues glycine 12 to lysine 18 and glycine 40 to threonine 42. The active-site Proton acceptor is aspartate 13. Mg(2+) contacts are provided by aspartate 13 and glycine 40. Residues aspartate 13–lysine 16, asparagine 38–histidine 41, threonine 130, arginine 144, glutamine 230, threonine 245, and arginine 309 each bind IMP. The active-site Proton donor is the histidine 41. Position 305-311 (threonine 305–arginine 311) interacts with substrate. Residues arginine 311, lysine 337 to aspartate 339, and serine 419 to glycine 421 each bind GTP.

Belongs to the adenylosuccinate synthetase family. Homodimer. It depends on Mg(2+) as a cofactor.

It is found in the cytoplasm. The enzyme catalyses IMP + L-aspartate + GTP = N(6)-(1,2-dicarboxyethyl)-AMP + GDP + phosphate + 2 H(+). It functions in the pathway purine metabolism; AMP biosynthesis via de novo pathway; AMP from IMP: step 1/2. Plays an important role in the de novo pathway of purine nucleotide biosynthesis. Catalyzes the first committed step in the biosynthesis of AMP from IMP. This Myxococcus xanthus (strain DK1622) protein is Adenylosuccinate synthetase.